Consider the following 528-residue polypeptide: Peptide chain release factor 3 (528 aa).

A tr-type G domain is found at 11–279 (NKRRTFAIIS…GIVEWAPKPL (269 aa)). Residues 20–27 (SHPDAGKT), 88–92 (DTPGH), and 142–145 (NKLD) contribute to the GTP site.

Belongs to the TRAFAC class translation factor GTPase superfamily. Classic translation factor GTPase family. PrfC subfamily.

Its subcellular location is the cytoplasm. Its function is as follows. Increases the formation of ribosomal termination complexes and stimulates activities of RF-1 and RF-2. It binds guanine nucleotides and has strong preference for UGA stop codons. It may interact directly with the ribosome. The stimulation of RF-1 and RF-2 is significantly reduced by GTP and GDP, but not by GMP. This chain is Peptide chain release factor 3, found in Shewanella sp. (strain W3-18-1).